The primary structure comprises 499 residues: Probable cytosol aminopeptidase (499 aa).

Mn(2+) contacts are provided by lysine 271 and aspartate 276. The active site involves lysine 283. Positions 294, 353, and 355 each coordinate Mn(2+). Arginine 357 is an active-site residue.

This sequence belongs to the peptidase M17 family. Mn(2+) serves as cofactor.

The protein localises to the cytoplasm. It catalyses the reaction Release of an N-terminal amino acid, Xaa-|-Yaa-, in which Xaa is preferably Leu, but may be other amino acids including Pro although not Arg or Lys, and Yaa may be Pro. Amino acid amides and methyl esters are also readily hydrolyzed, but rates on arylamides are exceedingly low.. It carries out the reaction Release of an N-terminal amino acid, preferentially leucine, but not glutamic or aspartic acids.. In terms of biological role, presumably involved in the processing and regular turnover of intracellular proteins. Catalyzes the removal of unsubstituted N-terminal amino acids from various peptides. This chain is Probable cytosol aminopeptidase, found in Bordetella bronchiseptica (strain ATCC BAA-588 / NCTC 13252 / RB50) (Alcaligenes bronchisepticus).